A 165-amino-acid polypeptide reads, in one-letter code: Cyclic pyranopterin monophosphate synthase (165 aa).

Substrate contacts are provided by residues 76 to 78 (MCH) and 113 to 114 (IE). Asp-128 is a catalytic residue.

Belongs to the MoaC family. As to quaternary structure, homohexamer; trimer of dimers.

It carries out the reaction (8S)-3',8-cyclo-7,8-dihydroguanosine 5'-triphosphate = cyclic pyranopterin phosphate + diphosphate. It participates in cofactor biosynthesis; molybdopterin biosynthesis. Catalyzes the conversion of (8S)-3',8-cyclo-7,8-dihydroguanosine 5'-triphosphate to cyclic pyranopterin monophosphate (cPMP). The chain is Cyclic pyranopterin monophosphate synthase from Limosilactobacillus fermentum (strain NBRC 3956 / LMG 18251) (Lactobacillus fermentum).